A 338-amino-acid chain; its full sequence is Putative transposase for insertion sequence element IS4SA (338 aa).

The protein belongs to the transposase 11 family.

The chain is Putative transposase for insertion sequence element IS4SA from Synechocystis sp. (strain ATCC 27184 / PCC 6803 / Kazusa).